The chain runs to 267 residues: Undecaprenyl-diphosphatase (267 aa).

7 helical membrane-spanning segments follow: residues 1 to 21, 40 to 60, 85 to 105, 112 to 132, 189 to 209, 219 to 239, and 245 to 265; these read MSLFTLFLLALVQGITEFLPI, GQAIDVAVHVGTLGAVILYFW, LAFLLIIATIPVIIFGLFLEV, LRSIAVIGWTMLIFGLVLYWA, AMLMSIPTIIATGVFAGAEVI, DGAIAAALSFLAALAALTLMF, and VSFTPYVIYRVILGVILLVIA.

The protein belongs to the UppP family.

Its subcellular location is the cell inner membrane. It carries out the reaction di-trans,octa-cis-undecaprenyl diphosphate + H2O = di-trans,octa-cis-undecaprenyl phosphate + phosphate + H(+). Its function is as follows. Catalyzes the dephosphorylation of undecaprenyl diphosphate (UPP). Confers resistance to bacitracin. This Jannaschia sp. (strain CCS1) protein is Undecaprenyl-diphosphatase.